We begin with the raw amino-acid sequence, 505 residues long: N-succinylglutamate 5-semialdehyde dehydrogenase (505 aa).

234–239 (GSAHTG) is a binding site for NAD(+). Catalysis depends on residues Glu257 and Cys291.

This sequence belongs to the aldehyde dehydrogenase family. AstD subfamily.

The catalysed reaction is N-succinyl-L-glutamate 5-semialdehyde + NAD(+) + H2O = N-succinyl-L-glutamate + NADH + 2 H(+). Its pathway is amino-acid degradation; L-arginine degradation via AST pathway; L-glutamate and succinate from L-arginine: step 4/5. Catalyzes the NAD-dependent reduction of succinylglutamate semialdehyde into succinylglutamate. This Yersinia pseudotuberculosis serotype IB (strain PB1/+) protein is N-succinylglutamate 5-semialdehyde dehydrogenase.